Here is a 393-residue protein sequence, read N- to C-terminus: S-adenosylmethionine synthase 3 (393 aa).

Residue Glu9 coordinates Mg(2+). ATP is bound at residue His15. Glu43 is a binding site for K(+). Residues Glu56 and Gln99 each contribute to the L-methionine site. ATP-binding positions include 167-169 (DGK), 235-238 (SGRF), Asp246, 252-253 (RK), Ala269, Lys273, and Lys277. Asp246 lines the L-methionine pocket. Lys277 is an L-methionine binding site.

This sequence belongs to the AdoMet synthase family. In terms of assembly, homotetramer. The cofactor is Mn(2+). Requires Mg(2+) as cofactor. It depends on Co(2+) as a cofactor. K(+) is required as a cofactor.

It localises to the cytoplasm. The enzyme catalyses L-methionine + ATP + H2O = S-adenosyl-L-methionine + phosphate + diphosphate. Its pathway is amino-acid biosynthesis; S-adenosyl-L-methionine biosynthesis; S-adenosyl-L-methionine from L-methionine: step 1/1. Its function is as follows. Catalyzes the formation of S-adenosylmethionine from methionine and ATP. The reaction comprises two steps that are both catalyzed by the same enzyme: formation of S-adenosylmethionine (AdoMet) and triphosphate, and subsequent hydrolysis of the triphosphate. This is S-adenosylmethionine synthase 3 (SAM3) from Petunia hybrida (Petunia).